A 772-amino-acid chain; its full sequence is TSA1-like protein (772 aa).

An N-terminal signal peptide occupies residues 1–24 (MGTKFLALGLSLCLVLSSFYQVSC). The tract at residues 49 to 72 (LQGNEAVDQTETSGQKNSTVSDNN) is disordered. EFE repeat repeat units follow at residues 98–138 (GAVT…KVEE), 139–176 (SKDDEEAARRHKMLEAIEREFEAAHAGFEQLKTDDSAQ), 177–213 (GLDDEQSAKRQSMLDEIERDFEAATKGLEQLKADDLT), 214–251 (GINDEEHAAKRQKMLEEIEREFEEATKGLEELRHSTSS), 252–292 (TDDE…VKDD), 293–330 (VDDKEQDAKRQSMLDAIEREFEAVTESFKQLEDIADNK), 331–368 (AEGDDESAKRQSMLDEIEREFEAATNSLKQLNLDDFSE), 369–407 (GDDSAESARRNSMLEAIEREFEAATKGLEELKANDSTGD), 408–439 (KDDDEHVARRKIMLEAIEREFEAATKGLEELK), and 440–472 (NESEQAENKRNSMLEAFEREFEAATNAKANGEN). The segment at 98 to 472 (GAVTDEVDKP…ATNAKANGEN (375 aa)) is 10 X approximate EFE repeat. Positions 187-476 (QSMLDEIERD…KANGENSAKN (290 aa)) form a coiled coil. Disordered stretches follow at residues 465–487 (NAKANGENSAKNPSTISTTVQKS) and 555–585 (HRKETSSKVGSVLGSSSSVTSTTSESAATSE). Positions 466–487 (AKANGENSAKNPSTISTTVQKS) are enriched in polar residues. Residues 561-585 (SKVGSVLGSSSSVTSTTSESAATSE) show a composition bias toward low complexity. A coiled-coil region spans residues 688-748 (DALHIRIVAI…AVHKAKDEQA (61 aa)).

In terms of assembly, has no interaction with PYK10 and is not part of the PYK10 complex. Interacts directly or indirectly with MEB1 and MEB2. As to expression, expressed in roots. Detected in shoot apex.

It localises to the endoplasmic reticulum lumen. Functionally, responsible for the ER body formation. Regulates the number and shape of the ER bodies and the accumulation of PYK10 in ER bodies, but is not involved in the expression of PYK10. This Arabidopsis thaliana (Mouse-ear cress) protein is TSA1-like protein (NAI2).